Reading from the N-terminus, the 203-residue chain is Arcadin-2 (203 aa).

Interacts with crenactin.

The protein resides in the cytoplasm. It is found in the cytoskeleton. Functionally, part of an actin-like archaeal cytoskeleton. Prevents polymerization of crenactin filaments by binding its C-terminus into crenactin's hydrophobic groove. May act by competing with the D-loop of the following crenactin subunit for the hydrophobic groove. In Pyrobaculum calidifontis (strain DSM 21063 / JCM 11548 / VA1), this protein is Arcadin-2.